The following is a 942-amino-acid chain: Diacylglycerol kinase theta (942 aa).

The tract at residues 1–59 (MAAAAEPGARAWLGGGSPRPGSPACSPVLGSGGRARPGPGPGPGPERAGVRAPGPAAAP) is disordered. 2 positions are modified to phosphoserine: S22 and S26. Residues 45-59 (PERAGVRAPGPAAAP) show a composition bias toward low complexity. 3 consecutive Phorbol-ester/DAG-type zinc fingers follow at residues 60–108 (GHSF…RIPC), 121–168 (AHCF…CSDC), and 183–234 (HHHW…APEC). Residues 269–295 (EPGEGGDGADGSAAVGPGRETQATPES) form a disordered region. The Ras-associating domain maps to 395 to 494 (AQEVLKIYPG…TRFYVAESRD (100 aa)). 2 short sequence motifs (LXXLL motif) span residues 555–559 (LYMLL) and 574–578 (LPDLL). Positions 584–721 (PDSCPLLVFV…MDRWTILLDA (138 aa)) constitute a DAGKc domain. Positions 908–942 (PKVHMLRKAKQKPRRAGTTRDARADAAPAPESDPR) are disordered. Over residues 911-924 (HMLRKAKQKPRRAG) the composition is skewed to basic residues. The span at 932–942 (DAAPAPESDPR) shows a compositional bias: low complexity.

Belongs to the eukaryotic diacylglycerol kinase family. As to quaternary structure, interacts with RHOA (constitutively activated, GTP-bound); the interaction inhibits DGKQ. Interacts with PRKCE. Interacts with PRKCH. Interacts with PLCB1. Interacts with NR5A1; the interaction requires both LXXLL motifs in DGKQ and is required for full phosphatidic acid-mediated activation of NR5A1. In terms of processing, phosphorylated by PRKCE and PRKCH in vitro.

Its subcellular location is the cytoplasm. The protein resides in the cytosol. The protein localises to the cell membrane. It is found in the synapse. It localises to the cytoskeleton. Its subcellular location is the nucleus. The protein resides in the nucleus speckle. The protein localises to the nucleus matrix. The enzyme catalyses a 1,2-diacyl-sn-glycerol + ATP = a 1,2-diacyl-sn-glycero-3-phosphate + ADP + H(+). It catalyses the reaction a 1-O-alkyl-sn-glycerol + ATP = a 1-O-alkyl-sn-glycero-3-phosphate + ADP + H(+). The catalysed reaction is 1-O-alkyl-2-acyl-sn-glycerol + ATP = 1-O-alkyl-2-acyl-sn-glycero-3-phosphate + ADP + H(+). It carries out the reaction 1,2-di-(9Z-octadecenoyl)-sn-glycerol + ATP = 1,2-di-(9Z-octadecenoyl)-sn-glycero-3-phosphate + ADP + H(+). The enzyme catalyses 1-O-hexadecyl-sn-glycerol + ATP = 1-O-hexadecyl-sn-glycero-3-phosphate + ADP + H(+). It catalyses the reaction 1-O-hexadecyl-2-acetyl-sn-glycerol + ATP = 1-O-hexadecyl-2-acetyl-sn-glycero-3-phosphate + ADP + H(+). The catalysed reaction is 1-octadecanoyl-2-(5Z,8Z,11Z,14Z-eicosatetraenoyl)-sn-glycerol + ATP = 1-octadecanoyl-2-(5Z,8Z,11Z,14Z-eicosatetraenoyl)-sn-glycero-3-phosphate + ADP + H(+). The protein operates within lipid metabolism; glycerolipid metabolism. With respect to regulation, activated by phosphatidylserine. Its function is as follows. Diacylglycerol kinase that converts diacylglycerol/DAG into phosphatidic acid/phosphatidate/PA and regulates the respective levels of these two bioactive lipids. Thereby, acts as a central switch between the signaling pathways activated by these second messengers with different cellular targets and opposite effects in numerous biological processes. Within the adrenocorticotropic hormone signaling pathway, produces phosphatidic acid which in turn activates NR5A1 and subsequent steroidogenic gene transcription. Also functions downstream of the nerve growth factor signaling pathway being specifically activated in the nucleus by the growth factor. Through its diacylglycerol activity also regulates synaptic vesicle endocytosis. In Homo sapiens (Human), this protein is Diacylglycerol kinase theta.